Reading from the N-terminus, the 375-residue chain is D-alanine--D-alanine ligase (375 aa).

The region spanning 145-348 (KRLLRDADLE…YPALITRLIE (204 aa)) is the ATP-grasp domain. Residue 175-230 (ITYLGSSLFVKPANQGSSVGVSKVINRISFDQALALAFCFDDKVLVESAINGRELE) participates in ATP binding. Positions 302, 315, and 317 each coordinate Mg(2+).

This sequence belongs to the D-alanine--D-alanine ligase family. Requires Mg(2+) as cofactor. Mn(2+) is required as a cofactor.

It is found in the cytoplasm. It carries out the reaction 2 D-alanine + ATP = D-alanyl-D-alanine + ADP + phosphate + H(+). It functions in the pathway cell wall biogenesis; peptidoglycan biosynthesis. In terms of biological role, cell wall formation. The sequence is that of D-alanine--D-alanine ligase from Baumannia cicadellinicola subsp. Homalodisca coagulata.